The sequence spans 453 residues: Tubulin beta-2 chain (453 aa).

Residues Q11, E71, S140, G144, T145, G146, N206, and N228 each contribute to the GTP site. E71 contributes to the Mg(2+) binding site.

Belongs to the tubulin family. Dimer of alpha and beta chains. A typical microtubule is a hollow water-filled tube with an outer diameter of 25 nm and an inner diameter of 15 nM. Alpha-beta heterodimers associate head-to-tail to form protofilaments running lengthwise along the microtubule wall with the beta-tubulin subunit facing the microtubule plus end conferring a structural polarity. Microtubules usually have 13 protofilaments but different protofilament numbers can be found in some organisms and specialized cells. Mg(2+) serves as cofactor.

It localises to the cytoplasm. Its subcellular location is the cytoskeleton. In terms of biological role, tubulin is the major constituent of microtubules, a cylinder consisting of laterally associated linear protofilaments composed of alpha- and beta-tubulin heterodimers. Microtubules grow by the addition of GTP-tubulin dimers to the microtubule end, where a stabilizing cap forms. Below the cap, tubulin dimers are in GDP-bound state, owing to GTPase activity of alpha-tubulin. In Geotrichum candidum (Oospora lactis), this protein is Tubulin beta-2 chain.